We begin with the raw amino-acid sequence, 229 residues long: Ras-related protein RabZ (229 aa).

Positions 1 to 39 (MGCFHSREPTATGKTKKEEPTSAVKTNKEEKSSNYVSEP) are disordered. Gly2 is lipidated: N-myristoyl glycine. A lipid anchor (S-palmitoyl cysteine) is attached at Cys3. Positions 15–32 (TKKEEPTSAVKTNKEEKS) are enriched in basic and acidic residues. Residue 57–64 (GDQATGKS) participates in GTP binding. The short motif at 79 to 88 (HKPSPIIIDC) is the Effector region element. GTP is bound by residues 106–110 (DTAGQ) and 164–167 (NKCD).

It belongs to the small GTPase superfamily. Rab family. In terms of processing, although this sequence lacks the C-terminal cysteine motifs subject to isoprenylation in other Rab proteins, it does have N-terminal myristoylation and S-palmitoylation sequence motifs.

This is Ras-related protein RabZ (rabZ) from Dictyostelium discoideum (Social amoeba).